A 172-amino-acid chain; its full sequence is Adenine phosphoribosyltransferase (172 aa).

Belongs to the purine/pyrimidine phosphoribosyltransferase family. Homodimer.

The protein localises to the cytoplasm. The enzyme catalyses AMP + diphosphate = 5-phospho-alpha-D-ribose 1-diphosphate + adenine. Its pathway is purine metabolism; AMP biosynthesis via salvage pathway; AMP from adenine: step 1/1. Its function is as follows. Catalyzes a salvage reaction resulting in the formation of AMP, that is energically less costly than de novo synthesis. The protein is Adenine phosphoribosyltransferase of Streptococcus equi subsp. zooepidemicus (strain H70).